A 338-amino-acid polypeptide reads, in one-letter code: Ketol-acid reductoisomerase (NADP(+)) (338 aa).

Residues 1-181 form the KARI N-terminal Rossmann domain; sequence MQVYYDKDCD…GGGRTGIIET (181 aa). NADP(+) contacts are provided by residues 24–27, arginine 47, serine 50, serine 52, and 82–85; these read FGSQ and DEFQ. The active site involves histidine 107. Glycine 133 is a binding site for NADP(+). The KARI C-terminal knotted domain occupies 182–327; sequence TFRDECETDL…RKLRAMMPWI (146 aa). Residues aspartate 190, glutamate 194, glutamate 226, and glutamate 230 each coordinate Mg(2+). Serine 251 contacts substrate.

It belongs to the ketol-acid reductoisomerase family. Requires Mg(2+) as cofactor.

It carries out the reaction (2R)-2,3-dihydroxy-3-methylbutanoate + NADP(+) = (2S)-2-acetolactate + NADPH + H(+). It catalyses the reaction (2R,3R)-2,3-dihydroxy-3-methylpentanoate + NADP(+) = (S)-2-ethyl-2-hydroxy-3-oxobutanoate + NADPH + H(+). The protein operates within amino-acid biosynthesis; L-isoleucine biosynthesis; L-isoleucine from 2-oxobutanoate: step 2/4. Its pathway is amino-acid biosynthesis; L-valine biosynthesis; L-valine from pyruvate: step 2/4. In terms of biological role, involved in the biosynthesis of branched-chain amino acids (BCAA). Catalyzes an alkyl-migration followed by a ketol-acid reduction of (S)-2-acetolactate (S2AL) to yield (R)-2,3-dihydroxy-isovalerate. In the isomerase reaction, S2AL is rearranged via a Mg-dependent methyl migration to produce 3-hydroxy-3-methyl-2-ketobutyrate (HMKB). In the reductase reaction, this 2-ketoacid undergoes a metal-dependent reduction by NADPH to yield (R)-2,3-dihydroxy-isovalerate. In Hydrogenovibrio crunogenus (strain DSM 25203 / XCL-2) (Thiomicrospira crunogena), this protein is Ketol-acid reductoisomerase (NADP(+)).